We begin with the raw amino-acid sequence, 392 residues long: Formate-dependent phosphoribosylglycinamide formyltransferase (392 aa).

N(1)-(5-phospho-beta-D-ribosyl)glycinamide-binding positions include 22–23 (EL) and Glu82. ATP contacts are provided by residues Arg114, Lys155, 160 to 165 (SSGKGQ), 195 to 198 (EGEV), and Glu203. Residues 119–308 (RLAAETLALP…EFALHVRAFL (190 aa)) form the ATP-grasp domain. Residues Glu267 and Glu279 each coordinate Mg(2+). N(1)-(5-phospho-beta-D-ribosyl)glycinamide is bound by residues Asp286, Lys355, and 362-363 (RR).

It belongs to the PurK/PurT family. In terms of assembly, homodimer.

The catalysed reaction is N(1)-(5-phospho-beta-D-ribosyl)glycinamide + formate + ATP = N(2)-formyl-N(1)-(5-phospho-beta-D-ribosyl)glycinamide + ADP + phosphate + H(+). It functions in the pathway purine metabolism; IMP biosynthesis via de novo pathway; N(2)-formyl-N(1)-(5-phospho-D-ribosyl)glycinamide from N(1)-(5-phospho-D-ribosyl)glycinamide (formate route): step 1/1. Involved in the de novo purine biosynthesis. Catalyzes the transfer of formate to 5-phospho-ribosyl-glycinamide (GAR), producing 5-phospho-ribosyl-N-formylglycinamide (FGAR). Formate is provided by PurU via hydrolysis of 10-formyl-tetrahydrofolate. The polypeptide is Formate-dependent phosphoribosylglycinamide formyltransferase (Edwardsiella ictaluri (strain 93-146)).